The sequence spans 627 residues: MKYILVTGGVISGVGKGVIASSFGTLLKSCGLDVTSIKIDPYINIDAGTFSPYEHGEVYVLDDGAEVDLDLGNYERFLDVTLHRDNNITTGKIYKLVIEKERTGEYLGKTVQVVPHITDAIQEWVERVAQTPVQGSSKPQVCIVELGGTIGDIEGMPFVEAFRQFQFRVKRENFCLAHVSLVPLPKATGEPKTKPTQSSVRELRGCGLSPDLIVCRSEKPIGLEVKEKISNFCHVGPDQVICIHDLNSIYHVPLLMEQNGVIEYLNERLQLNIDMSKRTKCLQQWRDLARRTETVRREVCIAVVGKYTKFTDSYASVVKALQHAALAVNRKLELVFIESCLLEEETLHSEPSKYHKEWQKLCDSHGILVPGGFGSRGMEGKIRACQWARENQKPLLGICLGLQAAVIEFARNKLGLKDANTTEIDPNTANALVIDMPEHHTGQLGGTMRLGKRITVFSDGPSVIRQLYGNPKSVQERHRHRYEVNPKYVHLLEEQGMRFVGTDVDKTRMEIIELSGHPYFVATQYHPEYLSRPLKPSPPFLGLILASVDRLNQYIQRGCRLSPRQLSDASSDEEDSVVGLAGATKSLSSLKIPITPTNGISKSCNGSISTSDSEGACGGVDPTNGHK.

The region spanning 300–554 (CIAVVGKYTK…LASVDRLNQY (255 aa)) is the Glutamine amidotransferase type-1 domain. Catalysis depends on for GATase activity residues Cys-399, His-526, and Glu-528. Ser-567, Ser-570, Ser-571, and Ser-588 each carry phosphoserine. Thr-595 carries the phosphothreonine modification. Residues 599 to 613 (GISKSCNGSISTSDS) show a composition bias toward polar residues. The segment at 599-627 (GISKSCNGSISTSDSEGACGGVDPTNGHK) is disordered.

Belongs to the CTP synthase family. In ovary, expressed in oocytes, follicle cells and nurse cells. Also expressed in larval and adult testis (at protein level). In larvae, expressed in lymph gland, salivary gland, regions of the midgut, testis, optical lobe and trachea. Isoform 1 is expressed in adult testis, ovary, accessory gland and head. Isoform 2 is weakly expressed in ovary.

Its subcellular location is the cytoplasm. It catalyses the reaction UTP + L-glutamine + ATP + H2O = CTP + L-glutamate + ADP + phosphate + 2 H(+). It participates in pyrimidine metabolism; CTP biosynthesis via de novo pathway; CTP from UDP: step 2/2. Its function is as follows. Catalyzes the ATP-dependent amination of UTP to CTP with either L-glutamine or ammonia as the source of nitrogen. Constitutes the rate-limiting enzyme in the synthesis of cytosine nucleotides. Functionally, required for assembly of cytoophidium in female germline cells. In nurse cells, CTPsyn filament assembly in the cytoophidium is regulated by Ack kinase which may thereby contribute to the control of CTP production at specific stages of oogenesis and development of the nurse cell membrane. The polypeptide is CTP synthase (Drosophila melanogaster (Fruit fly)).